The sequence spans 376 residues: Ribonucleoside-diphosphate reductase subunit beta (376 aa).

Fe cation-binding residues include D85, E116, and H119. The active site involves Y123. Fe cation-binding residues include E205, E239, and H242.

Belongs to the ribonucleoside diphosphate reductase small chain family. Tetramer of two alpha and two beta subunits. Fe cation serves as cofactor.

It carries out the reaction a 2'-deoxyribonucleoside 5'-diphosphate + [thioredoxin]-disulfide + H2O = a ribonucleoside 5'-diphosphate + [thioredoxin]-dithiol. Its function is as follows. Provides the precursors necessary for DNA synthesis. Catalyzes the biosynthesis of deoxyribonucleotides from the corresponding ribonucleotides. In Haemophilus influenzae (strain ATCC 51907 / DSM 11121 / KW20 / Rd), this protein is Ribonucleoside-diphosphate reductase subunit beta (nrdB).